The following is a 353-amino-acid chain: Phospho-furanose lactonase (353 aa).

5 residues coordinate Zn(2+): histidine 24, histidine 26, lysine 153, histidine 186, and histidine 214. Lysine 153 bears the N6-carboxylysine mark. Residue 244–245 participates in substrate binding; it reads KY. Aspartate 272 lines the Zn(2+) pocket. 275 to 278 is a substrate binding site; that stretch reads RILY.

The protein belongs to the metallo-dependent hydrolases superfamily. Phosphotriesterase family. The cofactor is Zn(2+).

The enzyme catalyses a 1,4-lactone + H2O = a 4-hydroxyacid + H(+). The catalysed reaction is D-xylono-1,4-lactone 5-phosphate + H2O = 5-phospho-D-xylonate + H(+). It catalyses the reaction L-arabino-1,4-lactone 5-phosphate + H2O = 5-phospho-L-arabinonate + H(+). Its function is as follows. Catalyzes the hydrolysis of D-xylono-1,4-lactone-5-phosphate and L-arabino-1,4-lactone-5-phosphate. Also able to hydrolyze carboxy 1,4-lactones. The chain is Phospho-furanose lactonase from Mycoplasmopsis synoviae (strain 53) (Mycoplasma synoviae).